The chain runs to 190 residues: Protein hunchback (190 aa).

Disordered regions lie at residues 13–59 (EPMS…SSNL), 86–110 (AAMT…PNPM), and 142–190 (QTND…KYMA). The segment covering 17 to 31 (HHHHHSHHHGHHHML) has biased composition (basic residues). Residues 90 to 100 (PSPSNNDQNSP) are compositionally biased toward polar residues. The span at 171–190 (EPEKDHDLISNSSEDMKYMA) shows a compositional bias: basic and acidic residues.

It belongs to the hunchback C2H2-type zinc-finger protein family.

It localises to the nucleus. Functionally, gap class segmentation protein that controls development of head structures. The chain is Protein hunchback (hb) from Scaptomyza crassifemur (Fruit fly).